We begin with the raw amino-acid sequence, 518 residues long: Protein nucleotidyltransferase YdiU (518 aa).

ATP-binding residues include G99, G101, R102, K122, D134, G135, R192, and R199. The active-site Proton acceptor is D270. Mg(2+) contacts are provided by N271 and D280. Position 280 (D280) interacts with ATP.

This sequence belongs to the SELO family. Requires Mg(2+) as cofactor. It depends on Mn(2+) as a cofactor.

The enzyme catalyses L-seryl-[protein] + ATP = 3-O-(5'-adenylyl)-L-seryl-[protein] + diphosphate. The catalysed reaction is L-threonyl-[protein] + ATP = 3-O-(5'-adenylyl)-L-threonyl-[protein] + diphosphate. It carries out the reaction L-tyrosyl-[protein] + ATP = O-(5'-adenylyl)-L-tyrosyl-[protein] + diphosphate. It catalyses the reaction L-histidyl-[protein] + UTP = N(tele)-(5'-uridylyl)-L-histidyl-[protein] + diphosphate. The enzyme catalyses L-seryl-[protein] + UTP = O-(5'-uridylyl)-L-seryl-[protein] + diphosphate. The catalysed reaction is L-tyrosyl-[protein] + UTP = O-(5'-uridylyl)-L-tyrosyl-[protein] + diphosphate. Its function is as follows. Nucleotidyltransferase involved in the post-translational modification of proteins. It can catalyze the addition of adenosine monophosphate (AMP) or uridine monophosphate (UMP) to a protein, resulting in modifications known as AMPylation and UMPylation. The polypeptide is Protein nucleotidyltransferase YdiU (Methylobacillus flagellatus (strain ATCC 51484 / DSM 6875 / VKM B-1610 / KT)).